The chain runs to 171 residues: ATP synthase subunit b (171 aa).

Residues 14–34 (LGDMLFIGISFIVLMALISVV) form a helical membrane-spanning segment. The span at 56-97 (SAQKSRQEASDLADQRRDALSHSRAEASEIVADAKKSGEKQR) shows a compositional bias: basic and acidic residues. Residues 56-104 (SAQKSRQEASDLADQRRDALSHSRAEASEIVADAKKSGEKQRSSIVADA) are disordered.

Belongs to the ATPase B chain family. As to quaternary structure, F-type ATPases have 2 components, F(1) - the catalytic core - and F(0) - the membrane proton channel. F(1) has five subunits: alpha(3), beta(3), gamma(1), delta(1), epsilon(1). F(0) has three main subunits: a(1), b(2) and c(10-14). The alpha and beta chains form an alternating ring which encloses part of the gamma chain. F(1) is attached to F(0) by a central stalk formed by the gamma and epsilon chains, while a peripheral stalk is formed by the delta and b chains.

The protein resides in the cell membrane. F(1)F(0) ATP synthase produces ATP from ADP in the presence of a proton or sodium gradient. F-type ATPases consist of two structural domains, F(1) containing the extramembraneous catalytic core and F(0) containing the membrane proton channel, linked together by a central stalk and a peripheral stalk. During catalysis, ATP synthesis in the catalytic domain of F(1) is coupled via a rotary mechanism of the central stalk subunits to proton translocation. In terms of biological role, component of the F(0) channel, it forms part of the peripheral stalk, linking F(1) to F(0). This is ATP synthase subunit b from Lactiplantibacillus plantarum (strain ATCC BAA-793 / NCIMB 8826 / WCFS1) (Lactobacillus plantarum).